A 533-amino-acid polypeptide reads, in one-letter code: Decreased expression in renal and prostate cancer protein (533 aa).

Over residues 1 to 12 (MKEPRIFPRERP) the composition is skewed to basic and acidic residues. Disordered regions lie at residues 1–31 (MKEP…GGPV), 67–164 (QNPS…PDPR), 177–259 (MRAG…RAGG), and 299–350 (ASGN…PNSA). S160 bears the Phosphoserine mark. Positions 299–309 (ASGNMGTNPPT) are enriched in polar residues. Residue R368 is modified to Asymmetric dimethylarginine. Omega-N-methylarginine is present on R396. S432 bears the Phosphoserine mark.

The protein belongs to the DERPC family.

It localises to the nucleus. In terms of biological role, potential tumor suppressor. This Mus musculus (Mouse) protein is Decreased expression in renal and prostate cancer protein.